The sequence spans 225 residues: tRNA (guanine-N(1)-)-methyltransferase (225 aa).

Residues glycine 110 and 130–135 contribute to the S-adenosyl-L-methionine site; that span reads VGDYVL.

The protein belongs to the RNA methyltransferase TrmD family. Homodimer.

The protein resides in the cytoplasm. The enzyme catalyses guanosine(37) in tRNA + S-adenosyl-L-methionine = N(1)-methylguanosine(37) in tRNA + S-adenosyl-L-homocysteine + H(+). In terms of biological role, specifically methylates guanosine-37 in various tRNAs. In Neorickettsia sennetsu (strain ATCC VR-367 / Miyayama) (Ehrlichia sennetsu), this protein is tRNA (guanine-N(1)-)-methyltransferase.